We begin with the raw amino-acid sequence, 153 residues long: Cofilin (153 aa).

One can recognise an ADF-H domain in the interval 4–148 (SGATVSQDCI…EYDSILKTVS (145 aa)).

This sequence belongs to the actin-binding proteins ADF family.

It localises to the cytoplasm. The protein localises to the cytoskeleton. Its subcellular location is the nucleus matrix. Its function is as follows. Controls reversibly actin polymerization and depolymerization in a pH-sensitive manner. It has the ability to bind G- and F-actin in a 1:1 ratio of cofilin to actin. Binding to F-actin is regulated by tropomyosin. It is the major component of intranuclear and cytoplasmic actin rods. Required for accumulation of actin at the cell division site via depolymerizing actin at the cell ends. In association with myosin II has a role in the assembly of the contractile ring via severing actin filaments. Involved in the maintenance of the contractile ring once formed. In association with profilin and capping protein, has a role in the mitotic reorganization of the actin cytoskeleton. The sequence is that of Cofilin (COF1) from Gibberella zeae (strain ATCC MYA-4620 / CBS 123657 / FGSC 9075 / NRRL 31084 / PH-1) (Wheat head blight fungus).